The chain runs to 157 residues: ATP synthase subunit b (157 aa).

Residues Leu11–Met31 form a helical membrane-spanning segment.

This sequence belongs to the ATPase B chain family. F-type ATPases have 2 components, F(1) - the catalytic core - and F(0) - the membrane proton channel. F(1) has five subunits: alpha(3), beta(3), gamma(1), delta(1), epsilon(1). F(0) has three main subunits: a(1), b(2) and c(10-14). The alpha and beta chains form an alternating ring which encloses part of the gamma chain. F(1) is attached to F(0) by a central stalk formed by the gamma and epsilon chains, while a peripheral stalk is formed by the delta and b chains.

It is found in the cell inner membrane. F(1)F(0) ATP synthase produces ATP from ADP in the presence of a proton or sodium gradient. F-type ATPases consist of two structural domains, F(1) containing the extramembraneous catalytic core and F(0) containing the membrane proton channel, linked together by a central stalk and a peripheral stalk. During catalysis, ATP synthesis in the catalytic domain of F(1) is coupled via a rotary mechanism of the central stalk subunits to proton translocation. Its function is as follows. Component of the F(0) channel, it forms part of the peripheral stalk, linking F(1) to F(0). The sequence is that of ATP synthase subunit b from Vesicomyosocius okutanii subsp. Calyptogena okutanii (strain HA).